The sequence spans 305 residues: Olfactory receptor 4X1 (305 aa).

Residues 1 to 23 lie on the Extracellular side of the membrane; the sequence is MVATNNVTEIIFVGFSQNWSEQR. N-linked (GlcNAc...) asparagine glycans are attached at residues asparagine 6 and asparagine 18. A helical transmembrane segment spans residues 24–47; the sequence is VISVMFLLMYTAVVLGNGLIVVTI. The Cytoplasmic segment spans residues 48–55; that stretch reads LASKVLTS. A helical membrane pass occupies residues 56-77; that stretch reads PMYFFLSYLSFVEICYCSVMAP. The Extracellular segment spans residues 78–98; the sequence is KLIFDSFIKRKVISLKGCLTQ. A disulfide bridge links cysteine 95 with cysteine 187. A helical transmembrane segment spans residues 99–118; the sequence is MFSLHFFGGTEAFLLMVMAY. Topologically, residues 119-137 are cytoplasmic; that stretch reads DRYVAICKPLHYMAIMNQR. The chain crosses the membrane as a helical span at residues 138–156; that stretch reads MCGLLVRIAWGGGLLHSVG. The Extracellular portion of the chain corresponds to 157–193; it reads QTFLIFQLPFCGPNIMDHYFCDVHPVLELACADTFFI. Residues 194–217 form a helical membrane-spanning segment; it reads SLLIITNGGSISVVSFFVLMASYL. At 218-233 the chain is on the cytoplasmic side; that stretch reads IILHFLRSHNLEGQHK. The chain crosses the membrane as a helical span at residues 234–256; sequence ALSTCASHVTVVDLFFIPCSLVY. Topologically, residues 257–267 are extracellular; the sequence is IRPCVTLPADK. The helical transmembrane segment at 268–287 threads the bilayer; it reads IVAVFYTVVTPLLNPVIYSF. Residues 288–305 lie on the Cytoplasmic side of the membrane; sequence RNAEVKNAMRRFIGGKVI.

The protein belongs to the G-protein coupled receptor 1 family.

Its subcellular location is the cell membrane. In terms of biological role, odorant receptor. The polypeptide is Olfactory receptor 4X1 (OR4X1) (Homo sapiens (Human)).